Reading from the N-terminus, the 748-residue chain is Catalase-peroxidase (748 aa).

The segment at residues 92–238 (WHSAGTYRIG…LAAVQMGLIY (147 aa)) is a cross-link (tryptophyl-tyrosyl-methioninium (Trp-Tyr) (with M-264)). The Proton acceptor role is filled by H93. Residues 238-264 (YVNPEGPDGNPDPIASARDIRDTFARM) constitute a cross-link (tryptophyl-tyrosyl-methioninium (Tyr-Met) (with W-92)). H279 contributes to the heme b binding site.

Belongs to the peroxidase family. Peroxidase/catalase subfamily. As to quaternary structure, homodimer or homotetramer. The cofactor is heme b. Formation of the three residue Trp-Tyr-Met cross-link is important for the catalase, but not the peroxidase activity of the enzyme.

The enzyme catalyses H2O2 + AH2 = A + 2 H2O. It catalyses the reaction 2 H2O2 = O2 + 2 H2O. Its function is as follows. Bifunctional enzyme with both catalase and broad-spectrum peroxidase activity. The sequence is that of Catalase-peroxidase from Xanthomonas axonopodis pv. citri (strain 306).